Here is a 663-residue protein sequence, read N- to C-terminus: Transmembrane 9 superfamily member 2 (663 aa).

Residues M1 to P28 form the signal peptide. The Lumenal portion of the chain corresponds to G29–Q300. The chain crosses the membrane as a helical span at residues W301–I321. Residues M322–Q374 are Cytoplasmic-facing. The chain crosses the membrane as a helical span at residues I375–N395. Over R396–A398 the chain is Lumenal. Residues L399 to A419 form a helical membrane-spanning segment. Residues R420 to T437 are Cytoplasmic-facing. A helical membrane pass occupies residues S438–G458. At E459–P466 the chain is on the lumenal side. Residues F467–I487 traverse the membrane as a helical segment. Residues G488–P522 lie on the Cytoplasmic side of the membrane. The helical transmembrane segment at G523–L543 threads the bilayer. The Lumenal segment spans residues N544–M554. Residues F555–L575 traverse the membrane as a helical segment. The Cytoplasmic portion of the chain corresponds to L576–R591. The helical transmembrane segment at S592–F612 threads the bilayer. Residues S613–M631 are Lumenal-facing. The helical transmembrane segment at I632–F652 threads the bilayer. Residues V653–D663 lie on the Cytoplasmic side of the membrane.

It belongs to the nonaspanin (TM9SF) (TC 9.A.2) family.

It is found in the endosome membrane. The protein localises to the golgi outpost. It localises to the cytoplasm. The protein resides in the cytoskeleton. Its subcellular location is the microtubule organizing center. In terms of biological role, in the intracellular compartments, may function as a channel or small molecule transporter. The sequence is that of Transmembrane 9 superfamily member 2 (TM9SF2) from Pongo abelii (Sumatran orangutan).